The sequence spans 213 residues: MNADTWTRLQAFRHALELTSCEASLTAGYDHLKDFPAGCSELASQTLTDYLTEDGSNLYSCIVGMQWDNGPGRYGHVIADPARDYIDLTLDQFPGYHNRIVAEPVESGGQLAADLNREPAISTADGIVASPSDKVNYITEQKNRQPMVIITECYKLIRMTARFIPMCQSSQLFQHQVFPRLFIISDVGSCSLFRNTLDRLATDWKVTLSILSL.

This is an uncharacterized protein from Escherichia coli (strain UTI89 / UPEC).